Consider the following 117-residue polypeptide: MVNIYDNANQMAKDLQETEQFKDLKKSLENLKNKPESLDLYQRMDKLQQQILAAQNSGQPLSDDVKKEYQKINEEVRNNDELKDMITKEQALFQMINDVQQAMTKPIGDLYDDLKAK.

The protein belongs to the UPF0342 family.

The polypeptide is UPF0342 protein LGAS_1451 (Lactobacillus gasseri (strain ATCC 33323 / DSM 20243 / BCRC 14619 / CIP 102991 / JCM 1131 / KCTC 3163 / NCIMB 11718 / NCTC 13722 / AM63)).